Here is a 348-residue protein sequence, read N- to C-terminus: Dihydroorotase (348 aa).

The Zn(2+) site is built by histidine 13 and histidine 15. Residues 15–17 (HLR) and asparagine 41 contribute to the substrate site. Zn(2+) is bound by residues lysine 99, histidine 136, and histidine 174. Lysine 99 is modified (N6-carboxylysine). Histidine 136 is a substrate binding site. A substrate-binding site is contributed by leucine 219. Aspartate 247 provides a ligand contact to Zn(2+). Residue aspartate 247 is part of the active site. The substrate site is built by histidine 251 and alanine 263.

This sequence belongs to the metallo-dependent hydrolases superfamily. DHOase family. Class II DHOase subfamily. In terms of assembly, homodimer. Requires Zn(2+) as cofactor.

The catalysed reaction is (S)-dihydroorotate + H2O = N-carbamoyl-L-aspartate + H(+). Its pathway is pyrimidine metabolism; UMP biosynthesis via de novo pathway; (S)-dihydroorotate from bicarbonate: step 3/3. Catalyzes the reversible cyclization of carbamoyl aspartate to dihydroorotate. This is Dihydroorotase from Coxiella burnetii (strain RSA 331 / Henzerling II).